The following is a 532-amino-acid chain: 56 kDa type-specific antigen (532 aa).

Residues 1–22 (MKKIMLIASAMSALSLPFSASA) form the signal peptide. Residues 67–87 (TNGLPFGGTLAAGMTIAPGFR) form a helical membrane-spanning segment. The interval 401 to 428 (QEEDAKNQGEGDCKQQQGTSEKSKKGKD) is disordered. A compositionally biased stretch (basic and acidic residues) spans 403 to 413 (EDAKNQGEGDC). A helical transmembrane segment spans residues 480–500 (TGMVASGALGVAINAAEGVYV).

The protein resides in the cell membrane. Functionally, may be an adherent factor for rickettsial adsorption to the host-cell surface and a determinant of virulence of individual rickettsial strain. It is the major outer membrane protein. The sequence is that of 56 kDa type-specific antigen from Orientia tsutsugamushi (Rickettsia tsutsugamushi).